Here is a 154-residue protein sequence, read N- to C-terminus: Large ribosomal subunit protein uL13 (154 aa).

It belongs to the universal ribosomal protein uL13 family. As to quaternary structure, part of the 50S ribosomal subunit.

In terms of biological role, this protein is one of the early assembly proteins of the 50S ribosomal subunit, although it is not seen to bind rRNA by itself. It is important during the early stages of 50S assembly. This chain is Large ribosomal subunit protein uL13, found in Brucella anthropi (strain ATCC 49188 / DSM 6882 / CCUG 24695 / JCM 21032 / LMG 3331 / NBRC 15819 / NCTC 12168 / Alc 37) (Ochrobactrum anthropi).